The primary structure comprises 2067 residues: Nuclear receptor coactivator 6 (2067 aa).

The TBP/GTF2A-binding region stretch occupies residues 1-932; sequence MVLDDLPNFE…PPRKKKNCHQ (932 aa). The segment at 1–1060 is CREBBP-binding region; the sequence is MVLDDLPNFE…LPVSQNVHPP (1060 aa). The interval 1–1314 is NCOA1-binding region; sequence MVLDDLPNFE…QAHKLDSVVV (1314 aa). Asymmetric dimethylarginine is present on Arg-95. Disordered stretches follow at residues 181-253 and 293-548; these read AVMT…RQMN and TRPL…PGNS. The segment covering 293-304 has biased composition (low complexity); that stretch reads TRPLQQHQQQPQ. Polar residues-rich tracts occupy residues 338–347, 357–372, 383–405, 421–457, 465–506, and 526–548; these read SLGTMTTNQG, MQAQ…TVQT, GSQQ…QFTA, PLQQ…QQQM, NPLS…QGPQ, and GQAN…PGNS. An NCOA6IP-binding region region spans residues 777-931; sequence VNNSPSQVMG…KPPRKKKNCH (155 aa). Phosphoserine is present on Ser-888. Positions 891–895 match the LXXLL motif 1 motif; the sequence is LVNLL. Disordered regions lie at residues 903–1279, 1313–1358, 1424–1481, 1497–1581, and 1769–1822; these read HFGV…QGLN, VVNS…APKL, NIPQ…EENK, QLLD…IPPV, and LNPD…GKGK. A compositionally biased stretch (low complexity) spans 907–916; the sequence is NNKQNNTNAN. Residues 917–929 show a composition bias toward basic residues; it reads KPKKKKPPRKKKN. Residues 984-996 show a composition bias toward low complexity; sequence QRPLPQMPPQLMQ. Pro residues predominate over residues 999 to 1024; the sequence is APPPQPPQQQPQPQLPQQQQPPPPSQ. Residues 1025-1044 are compositionally biased toward low complexity; that stretch reads PQSQQQQQQQQMMMMLMMQQ. Arg-1050 and Arg-1061 each carry asymmetric dimethylarginine. A compositionally biased stretch (polar residues) spans 1066–1078; that stretch reads PDSQRMPVQQSGN. Arg-1099 is modified (asymmetric dimethylarginine). Positions 1103–1123 are enriched in polar residues; that stretch reads SVNTPMGSNSRKMVYQENPQN. Residues 1124-1137 show a composition bias toward low complexity; it reads SSSSPLGEMSSLPE. 3 stretches are compositionally biased toward polar residues: residues 1152 to 1165, 1176 to 1194, and 1205 to 1217; these read NMPS…NQLM, LSAT…SLPS, and APTQ…TPNR. The segment covering 1222–1235 has biased composition (pro residues); that stretch reads PYYPQTPNNRPPST. Polar residues predominate over residues 1313-1324; the sequence is VVNSGKQSNPGT. Low complexity predominate over residues 1326–1349; sequence KRASPSNSRRSSPGSSRKTTPSPG. The segment covering 1424–1435 has biased composition (polar residues); it reads NIPQDSDCQNAQ. Positions 1495 to 1499 match the LXXLL motif 2 motif; that stretch reads LSQLL. Residues 1545–1562 show a composition bias toward low complexity; the sequence is EPSTSLSSPHSSEPCSTL. The tract at residues 1644-2067 is EP300/CRSP3-binding region; the sequence is SEGQSAAQSN…AVQSKRRKSK (424 aa). Polar residues predominate over residues 1775 to 1805; that stretch reads SPQTNTSADQSTLPPSQPTTVVSSLLTNSPG. A compositionally biased stretch (low complexity) spans 1806–1818; it reads SSANRRSPVSSSK. 2 positions are modified to N6-acetyllysine: Lys-1822 and Lys-1825. Disordered regions lie at residues 1840–1911 and 1957–2067; these read GSLE…LPGG and VGSH…RKSK. Residues 1871–1883 are compositionally biased toward polar residues; that stretch reads EQCSTELDSKTPT. Residues 1892–1904 are compositionally biased toward low complexity; it reads MTSSPMAPSSTST. A compositionally biased stretch (basic and acidic residues) spans 2005–2014; the sequence is EPKEIVEKSK. Ser-2022 is subject to Phosphoserine.

Monomer and homodimer. Interacts in vitro with the basal transcription factors GTF2A and TBP, suggesting an autonomous transactivation function. Interacts with NCOA1, CRSP3, RBM14, the histone acetyltransferase proteins EP300 and CREBBP, and with methyltransferase proteins NCOA6IP and PRMT2. Interacts with RBM39. Component of the MLL2/3 complex (also named ASCOM complex), at least composed of KMT2D/MLL2 or KMT2C/MLL3, ASH2L, RBBP5, WDR5, NCOA6, DPY30, KDM6A, PAXIP1/PTIP, PAGR1 and alpha- and beta-tubulin. Interacts with ZNF335; may enhance ligand-dependent transcriptional activation by nuclear hormone receptors. Post-translationally, phosphorylated. Widely expressed. High expression in testis and weak expression in small intestine.

Its subcellular location is the nucleus. In terms of biological role, nuclear receptor coactivator that directly binds nuclear receptors and stimulates the transcriptional activities in a hormone-dependent fashion. Coactivates expression in an agonist- and AF2-dependent manner. Involved in the coactivation of different nuclear receptors, such as for steroids (GR and ERs), retinoids (RARs and RXRs), thyroid hormone (TRs), vitamin D3 (VDR) and prostanoids (PPARs). Probably functions as a general coactivator, rather than just a nuclear receptor coactivator. May also be involved in the coactivation of the NF-kappa-B pathway. May coactivate expression via a remodeling of chromatin and its interaction with histone acetyltransferase proteins. Involved in placental, cardiac, hepatic and embryonic development. This is Nuclear receptor coactivator 6 (Ncoa6) from Mus musculus (Mouse).